We begin with the raw amino-acid sequence, 349 residues long: Green-sensitive opsin-2 (349 aa).

Topologically, residues 1–36 (MNGTEGNNFYIPMSNRTGLVRSPYEYTQYYLADPWQ) are extracellular. N-linked (GlcNAc...) asparagine glycans are attached at residues Asn2 and Asn15. The chain crosses the membrane as a helical span at residues 37–61 (FKALAFYMFFLICFGLPINVLTLLV). At 62-73 (TAQHKKLRQPLN) the chain is on the cytoplasmic side. A helical membrane pass occupies residues 74 to 99 (YILVNLAFAGTIMAFFGFTVTFYCSI). At 100 to 113 (NGYMALGPTGCAIE) the chain is on the extracellular side. Cys110 and Cys187 form a disulfide bridge. The chain crosses the membrane as a helical span at residues 114-133 (GFFATLGGQVALWSLVVLAI). Residues 134–152 (ERYIVVCKPMGSFKFSSNH) are Cytoplasmic-facing. The helical transmembrane segment at 153 to 176 (AMAGIAFTWVMASSCAVPPLFGWS) threads the bilayer. Residues 177 to 202 (RYIPEGMQTSCGPDYYTLNPEFNNES) lie on the Extracellular side of the membrane. Asn200 is a glycosylation site (N-linked (GlcNAc...) asparagine). The helical transmembrane segment at 203–230 (YVLYMFSCHFCVPVTTIFFTYGSLVCTV) threads the bilayer. At 231–252 (KAAAAQQQESESTQKAEREVTR) the chain is on the cytoplasmic side. The helical transmembrane segment at 253 to 276 (MVILMVLGFLVAWVPYASFAAWIF) threads the bilayer. The Extracellular portion of the chain corresponds to 277-284 (FNRGAAFS). A helical membrane pass occupies residues 285–309 (AQAMAIPAFFSKASALFNPIIYVLL). Lys296 carries the N6-(retinylidene)lysine modification. At 310–349 (NKQFRSCMLNTLFCGKSPLGDDESSSVSTSKTEVSSVSPA) the chain is on the cytoplasmic side. A disordered region spans residues 328–349 (LGDDESSSVSTSKTEVSSVSPA). Low complexity predominate over residues 334–349 (SSVSTSKTEVSSVSPA).

It belongs to the G-protein coupled receptor 1 family. Opsin subfamily. In terms of processing, phosphorylated on some or all of the serine and threonine residues present in the C-terminal region.

Its subcellular location is the membrane. Its function is as follows. Visual pigments are the light-absorbing molecules that mediate vision. They consist of an apoprotein, opsin, covalently linked to cis-retinal. The chain is Green-sensitive opsin-2 (opn1mw2) from Danio rerio (Zebrafish).